A 375-amino-acid polypeptide reads, in one-letter code: tRNA-specific 2-thiouridylase MnmA (375 aa).

Residues 20–27 (AMSGGVDS) and Leu-46 contribute to the ATP site. Cys-114 (nucleophile) is an active-site residue. A disulfide bridge connects residues Cys-114 and Cys-211. Residue Gly-138 coordinates ATP. Residues 160–162 (RDQ) are interaction with tRNA. Cys-211 functions as the Cysteine persulfide intermediate in the catalytic mechanism.

This sequence belongs to the MnmA/TRMU family.

Its subcellular location is the cytoplasm. It carries out the reaction S-sulfanyl-L-cysteinyl-[protein] + uridine(34) in tRNA + AH2 + ATP = 2-thiouridine(34) in tRNA + L-cysteinyl-[protein] + A + AMP + diphosphate + H(+). Its function is as follows. Catalyzes the 2-thiolation of uridine at the wobble position (U34) of tRNA, leading to the formation of s(2)U34. This is tRNA-specific 2-thiouridylase MnmA from Ruegeria pomeroyi (strain ATCC 700808 / DSM 15171 / DSS-3) (Silicibacter pomeroyi).